The primary structure comprises 137 residues: Small ribosomal subunit protein uS9c (137 aa).

Residues 106–137 form a disordered region; that stretch reads KSEGYLTRDPRVKERKKYGLKKARKAPQFSKR. The span at 118-137 shows a compositional bias: basic residues; it reads KERKKYGLKKARKAPQFSKR.

This sequence belongs to the universal ribosomal protein uS9 family.

The protein localises to the plastid. It is found in the chloroplast. This chain is Small ribosomal subunit protein uS9c (rps9), found in Pyropia yezoensis (Susabi-nori).